Reading from the N-terminus, the 220-residue chain is Redox-sensing transcriptional repressor Rex (220 aa).

A DNA-binding region (H-T-H motif) is located at residues 17–56 (LYARSLRYLLQEGVESVSSQELGDRINVTAAQIRKDLSYF). 91 to 96 (GIGHLG) lines the NAD(+) pocket.

Belongs to the transcriptional regulatory Rex family. In terms of assembly, homodimer.

The protein localises to the cytoplasm. In terms of biological role, modulates transcription in response to changes in cellular NADH/NAD(+) redox state. This chain is Redox-sensing transcriptional repressor Rex, found in Roseiflexus sp. (strain RS-1).